A 429-amino-acid chain; its full sequence is MSRSSDLFHKAQTIIPGGVNSPVRAFKGVGGEPVFFKSGKGAYLTDVDDKQYIDYVGSWGPLILGHCHPKVIEAVDNVLHSGMSFGAPTELEIQLAEKIASLMPSIEKIRMVNSGTEATMTAIRLARGFTNKNKFIKFNGCYHGHSDSLLVKAGSGLLTLGIPSTPGIPQCITEHTLTADFNNLEQVAQLFEKYPNDIATVILEPVPGNMGFILPKIEFLKGLRELCDQYNALLIFDEVMTGFRVGLHGAQGLFGIKPDITTLGKIIGGGMPVGALGGKREIMSFLAPEGPVYQAGTLSGNPLAMAAGLATLKEIEKINFFEDLSSTTNKLTEALSDAAENANIPLFAASLGGMFGFCFTDKNSVENYLDVASSDEVLFKKFFHAMLAQGVYFAPSMYEAGFVSSMHGDLEIQKTYDAAELVLNQLKSA.

The residue at position 265 (K265) is an N6-(pyridoxal phosphate)lysine.

Belongs to the class-III pyridoxal-phosphate-dependent aminotransferase family. HemL subfamily. As to quaternary structure, homodimer. Requires pyridoxal 5'-phosphate as cofactor.

The protein localises to the cytoplasm. It carries out the reaction (S)-4-amino-5-oxopentanoate = 5-aminolevulinate. It participates in porphyrin-containing compound metabolism; protoporphyrin-IX biosynthesis; 5-aminolevulinate from L-glutamyl-tRNA(Glu): step 2/2. This is Glutamate-1-semialdehyde 2,1-aminomutase from Legionella pneumophila (strain Lens).